Reading from the N-terminus, the 268-residue chain is Type III pantothenate kinase 1 (268 aa).

An ATP-binding site is contributed by 6–13 (DIGNTNIT). Substrate-binding positions include Tyr-100 and 107–110 (GTDR). Residue Asp-109 is the Proton acceptor of the active site. K(+) is bound at residue Asp-133. Residue Thr-136 participates in ATP binding.

This sequence belongs to the type III pantothenate kinase family. Homodimer. The cofactor is NH4(+). K(+) serves as cofactor.

It is found in the cytoplasm. It carries out the reaction (R)-pantothenate + ATP = (R)-4'-phosphopantothenate + ADP + H(+). Its pathway is cofactor biosynthesis; coenzyme A biosynthesis; CoA from (R)-pantothenate: step 1/5. Its function is as follows. Catalyzes the phosphorylation of pantothenate (Pan), the first step in CoA biosynthesis. The polypeptide is Type III pantothenate kinase 1 (Symbiobacterium thermophilum (strain DSM 24528 / JCM 14929 / IAM 14863 / T)).